A 243-amino-acid polypeptide reads, in one-letter code: uncharacterized protein (243 aa).

Belongs to the ycf23 family.

The protein localises to the plastid. It is found in the cyanelle. This is an uncharacterized protein from Cyanophora paradoxa.